Here is a 189-residue protein sequence, read N- to C-terminus: Peptidyl-tRNA hydrolase (189 aa).

Tyrosine 14 is a tRNA binding site. Catalysis depends on histidine 19, which acts as the Proton acceptor. 3 residues coordinate tRNA: tyrosine 64, asparagine 66, and asparagine 112.

It belongs to the PTH family. As to quaternary structure, monomer.

The protein localises to the cytoplasm. The enzyme catalyses an N-acyl-L-alpha-aminoacyl-tRNA + H2O = an N-acyl-L-amino acid + a tRNA + H(+). Hydrolyzes ribosome-free peptidyl-tRNAs (with 1 or more amino acids incorporated), which drop off the ribosome during protein synthesis, or as a result of ribosome stalling. In terms of biological role, catalyzes the release of premature peptidyl moieties from peptidyl-tRNA molecules trapped in stalled 50S ribosomal subunits, and thus maintains levels of free tRNAs and 50S ribosomes. This is Peptidyl-tRNA hydrolase from Dehalococcoides mccartyi (strain ATCC BAA-2100 / JCM 16839 / KCTC 5957 / BAV1).